A 424-amino-acid chain; its full sequence is Elongation factor 1-alpha (424 aa).

The region spanning 5 to 223 is the tr-type G domain; that stretch reads KPHLNLITIG…DAFKVPEKPI (219 aa). The tract at residues 14-21 is G1; that stretch reads GHVDHGKS. A GTP-binding site is contributed by 14–21; it reads GHVDHGKS. Mg(2+) is bound at residue Ser-21. The G2 stretch occupies residues 70–74; that stretch reads GVTID. Residues 91–94 form a G3 region; that stretch reads DAPG. GTP is bound by residues 91–95 and 148–151; these read DAPGH and NKMD. The G4 stretch occupies residues 148-151; that stretch reads NKMD. Positions 187-189 are G5; the sequence is SGY.

It belongs to the TRAFAC class translation factor GTPase superfamily. Classic translation factor GTPase family. EF-Tu/EF-1A subfamily.

Its subcellular location is the cytoplasm. The catalysed reaction is GTP + H2O = GDP + phosphate + H(+). Functionally, GTP hydrolase that promotes the GTP-dependent binding of aminoacyl-tRNA to the A-site of ribosomes during protein biosynthesis. This chain is Elongation factor 1-alpha, found in Thermoplasma acidophilum (strain ATCC 25905 / DSM 1728 / JCM 9062 / NBRC 15155 / AMRC-C165).